Consider the following 161-residue polypeptide: Cap-associated protein CAF20 (161 aa).

Residues 52 to 72 (HFGRRRSSHHHGRPKIKHNKP) are compositionally biased toward basic residues. The segment at 52-108 (HFGRRRSSHHHGRPKIKHNKPKVTTDSDGWCTFEAKKKGSGEDDEEETETTPTSTVP) is disordered. A phosphoserine mark is found at S78 and S91. Phosphothreonine is present on residues T99, T101, and T102. S154 carries the phosphoserine modification.

It belongs to the CAF20 family. As to quaternary structure, interacts with TIF45. In terms of processing, phosphorylated by casein kinase II complex (CK2).

It localises to the cytoplasm. In terms of biological role, acts as an inhibitor of cap-dependent translation. Competes with eIF4G1/TIF4631 and EAP1 for binding to eIF4E/TIF45 and interferes with the formation of the eIF4F complex, inhibiting translation and stabilizing mRNA. Binding affinity for eIF4E/TIF45 is 10-fold less than that of eIF4G1/TIF4631. Required for induction of pseudohyphal growth in response to nitrogen limitation, probably by regulating STE12 translation. The polypeptide is Cap-associated protein CAF20 (CAF20) (Saccharomyces cerevisiae (strain YJM789) (Baker's yeast)).